The chain runs to 628 residues: MEPPDARAGARRAPRLLVLALLLAAPPGSKAEVRLSVPPLVEVMRGESVTLDCSPLGTHDYFMLEWFLVDRSGARHRLASAELRGSELRDKELNSRGRSPPYQLDSQGRLVLPEAQVGDERDYVCVVKAGAAGTAEATARLKVFAKPEAPEVSPNKGILSVMDDFAQEIATCSSRNGNPAPQIMWYRNGQPLAVPLEVNSEGYMTTRTVREASGLLSLTSTLYLRLHKPDREASFHCSVHYYLPAGQHGRLDGPSFSLTLHYPTEHVLFWLGSQSTAEGWVREGDSVQLLCQGDGSPTPEYTFFWLQDKQEDVLKTSLEGNLTLERVQRNQSGTYGCRVEDFDVPEDAELSKTLELRVAYLDSLELSAGEELSLPLHNSTTVTCSARGLPTPTLYWTKDSAPMGEDPTLSLHSVTFDSAGTYTCEAYMPRIPLLSRTRSFRLLVQGTPELKAKETQPKAEGSWTEGDEVTLICYARGYPKPKLTWSQLGGSPTEPAPGGQGWVSSSLTLKVTSALSQDGVSCEASNPLGNTHHVFHFGTVAPQTSQAGVAVMAVAISVALLLLVVAVFYCMRRKGRPGCCQWGEKGSPPPGEPKLSHSGSQRPEQTGLLMGSASGGAKHGSGGFGDEC.

An N-terminal signal peptide occupies residues 1 to 31; that stretch reads MEPPDARAGARRAPRLLVLALLLAAPPGSKA. 2 consecutive Ig-like V-type domains span residues 32-142 and 150-253; these read EVRL…ARLK and PEVS…RLDG. At 32–547 the chain is on the extracellular side; that stretch reads EVRLSVPPLV…GTVAPQTSQA (516 aa). Cystine bridges form between C53-C125, C172-C237, and C291-C337. Ig-like C2-type domains lie at 254–355, 355–441, and 448–538; these read PSFS…KTLE, ELRV…RSFR, and PELK…FHFG. 3 N-linked (GlcNAc...) asparagine glycosylation sites follow: N321, N330, and N378. 2 disulfide bridges follow: C384-C424 and C473-C522. Residues 548–568 form a helical membrane-spanning segment; that stretch reads GVAVMAVAISVALLLLVVAVF. At 569-628 the chain is on the cytoplasmic side; that stretch reads YCMRRKGRPGCCQWGEKGSPPPGEPKLSHSGSQRPEQTGLLMGSASGGAKHGSGGFGDEC. Residues 580–628 are disordered; that stretch reads CQWGEKGSPPPGEPKLSHSGSQRPEQTGLLMGSASGGAKHGSGGFGDEC. A phosphoserine mark is found at S596, S598, S600, and S621. Residues 613-628 are compositionally biased toward gly residues; sequence ASGGAKHGSGGFGDEC.

In terms of assembly, homodimer. Interacts with ITGA4:ITGB1. Interacts with spectrins SPTA1 and SPTB1. In terms of processing, epinephrine-stimulated phosphorylation of Ser-621 by PKA enhances adhesion to laminin. Ser-621 can also be phosphorylated by AKT1.

Its subcellular location is the cell membrane. Functionally, transmembrane glycoprotein that functions as both a receptor and an adhesion molecule playing a crucial role in cell adhesion, motility, migration and invasion. Extracellular domain enables binding to extracellular matrix proteins, such as laminin, integrin and other ligands while its intracellular domain interacts with cytoskeletal proteins like hemoglobin, facilitating cell signal transduction. Serves as a receptor for laminin alpha-5/LAMA5 to promote cell adhesion. Mechanistically, JAK2 induces BCAM phosphorylation and activates its adhesion to laminin by stimulating a Rap1/AKT signaling pathway in the absence of EPOR. This chain is Basal cell adhesion molecule (BCAM), found in Bos taurus (Bovine).